Reading from the N-terminus, the 197-residue chain is RNA-binding protein with multiple splicing (197 aa).

Methionine 1 is modified (N-acetylmethionine). Threonine 12 carries the phosphothreonine modification. Residues 24–101 form the RRM domain; the sequence is RTLFVSGLPL…QTLRLEFAKA (78 aa). The interaction with RNA stretch occupies residues 98–105; that stretch reads FAKANTKM. Position 113 is a phosphothreonine (threonine 113).

In terms of assembly, homodimer; each protein chain binds one RNA molecule via the external surface of the homodimer. Interacts with RNA binding proteins MBNL1, RBFOX2, RBM4 and RBM14; the interaction allows cooperative assembly of stable cell-specific alternative splicing regulatory complexes. Also interacts with RBM47, MATR3 and ESRP2. Interacts with SMAD2, SMAD3 and SMAD4; the interactions are direct. In terms of tissue distribution, mRNA expressed in developing heart, with significantly higher expression in the atria relative to the ventricles.

The protein localises to the nucleus. It is found in the cytoplasm. The protein resides in the stress granule. Its subcellular location is the P-body. RNA binding protein that mediates the regulation of pre-mRNA alternative splicing (AS). Acts either as activator (FLNB, HSPG2, LIPA1, MYOCD, PTPRF and PPFIBP1) or repressor (TPM1, ACTN1, ITGA7, PIEZO1, LSM14B, MBNL1 and MBML2) of splicing events on specific pre-mRNA targets. Together with RNA binding proteins RBFOX2 and MBNL1/2, activates a splicing program associated with differentiated contractile vascular smooth muscle cells (SMC) by regulating AS of numerous pre-mRNA involved in actin cytoskeleton and focal adhesion machineries, suggesting a role in promoting a cell differentiated state. Binds to introns, exons and 3'-UTR associated with tandem CAC trinucleotide motifs separated by a variable spacer region, at a minimum as a dimer. The minimal length of RNA required for RBPMS-binding tandem CAC motifs is 15 nt, with spacing ranging from 1 to 9 nt. Can also bind to CA dinucleotide repeats. Mediates repression of TPM1 exon 3 by binding to CAC tandem repeats in the flanking intronic regions, followed by higher-order oligomerization and heterotypic interactions with other splicing regulators including MBNL1 and RBFOX2, which prevents assembly of ATP-dependent splicing complexes. The protein is RNA-binding protein with multiple splicing of Mus musculus (Mouse).